Here is a 176-residue protein sequence, read N- to C-terminus: UPF0262 protein GbCGDNIH1_1393 (176 aa).

It belongs to the UPF0262 family.

The sequence is that of UPF0262 protein GbCGDNIH1_1393 from Granulibacter bethesdensis (strain ATCC BAA-1260 / CGDNIH1).